A 159-amino-acid chain; its full sequence is Ribosomal RNA large subunit methyltransferase H (159 aa).

Residues Leu76 and Gly108 each coordinate S-adenosyl-L-methionine.

Belongs to the RNA methyltransferase RlmH family. As to quaternary structure, homodimer.

The protein resides in the cytoplasm. The catalysed reaction is pseudouridine(1915) in 23S rRNA + S-adenosyl-L-methionine = N(3)-methylpseudouridine(1915) in 23S rRNA + S-adenosyl-L-homocysteine + H(+). Its function is as follows. Specifically methylates the pseudouridine at position 1915 (m3Psi1915) in 23S rRNA. The sequence is that of Ribosomal RNA large subunit methyltransferase H from Finegoldia magna (strain ATCC 29328 / DSM 20472 / WAL 2508) (Peptostreptococcus magnus).